The primary structure comprises 378 residues: UPF0754 membrane protein Bcer98_0694 (378 aa).

Residues 358 to 378 (LGALLGGTIGLMQGILLLFLM) form a helical membrane-spanning segment.

The protein belongs to the UPF0754 family.

The protein resides in the cell membrane. The sequence is that of UPF0754 membrane protein Bcer98_0694 from Bacillus cytotoxicus (strain DSM 22905 / CIP 110041 / 391-98 / NVH 391-98).